Reading from the N-terminus, the 299-residue chain is tRNA pseudouridine synthase B (299 aa).

Asp47 serves as the catalytic Nucleophile.

This sequence belongs to the pseudouridine synthase TruB family. Type 1 subfamily.

The enzyme catalyses uridine(55) in tRNA = pseudouridine(55) in tRNA. Functionally, responsible for synthesis of pseudouridine from uracil-55 in the psi GC loop of transfer RNAs. This is tRNA pseudouridine synthase B from Dechloromonas aromatica (strain RCB).